We begin with the raw amino-acid sequence, 1254 residues long: MFPFQPMYPMQPMPYRNPFAAPRRPWFPRTDPFLAMQVQELTRSMANLTFKQRRGAPPEGPPAKKSKREAPQKQRGGQRKKKKNEGKKKAKTGPPNLKTQNGNKKKTNKKPGKRQRMVMKLESDKTFPIMLEGKINGYACVVGGKLFRPMHVEGKIDNDVLAALKTKKASKYDLEYADVPQNMRADTFKYTHEKPQGYYSWHHGAVQYENGRFTVPRGVGARGDSGRPILDNQGRVVAIVLGGVNEGSRTALSVVMWNEKGVTVKYTPENCEQWSLVTTMCLLANVTFPCAQPPICYDRKPAETLAMLSANVDNPGYDELLKAAVTCPGRKRRSTEELFKEYKLTRPYMARCVRCAVGSCHSPIAIEAVKSDGHDGYVRLQTSSQYGLDPSGNLKSRTMRYNMYGTIEEIPLHQVSLHTSRPCHIVDGHGYFLLARCPAGDSITMEFKKDSVTHSCSVPYEVKFNPVGRELYTHPPEHGAEQACQVYAHDAQNRGAYVEMHLPGSEVDSSLVSLSSGLVSVTPPAGTSALVECECSGTTISKTINKTKQFSQCTKKEQCRAYRLQNDKWVYNSDKLPKAAGATLKGKLHVPFLLADGKCTVPLAPEPMITFGFRSVSLKLHPKYPTYLTTRELADEPHYTHELISEPSVRNFSVTAKGWEFVWGNHPPKRFWAQETAPGNPHGLPHEVIVHYYHRYPMSTITGLSICAAIVAVSIAASTWLLCRSRASCLTPYRLTPNAKMPLCLAVLCCARSARAETTWESLDHLWNNNQQMFWTQLLIPLAALIVVTRLLKCMCCVVPFLVVAGAAGAGAYEHATTMPNQAGISYNTIVNRAGYAPLPISITPTKIKLIPTVNLEYVTCHYKTGMDSPTIKCCGSQECTPTYRPDEQCKVFAGVYPFMWGGAYCFCDTENTQISKAYVMKSEDCLADHAAAYKAHTASVQALLNITVGEHSTVTTVYVNGETPVNFNGVKLTAGPLSTAWTPFDRKIVQYAGEIYNYDFPEYGAGQPGAFGDIQLRTVSSSDLYANTNLVLQRPKAGAIHVPYTQAPSGFEQWKKDKAPSLKFTAPFGCEIYTNPIRAENCAVGSIPLAFDIPDALFTRVSETPTLSAAECTLNECVYSSDFGGIATVKYSASKSGKCAVHVPSGTATLKEASVELAEQGSVTIHFSTANIHPEFRLQICTSFVTCKGDCHPPKDHIVTHPQYHAQTFTAAVSKTAWTWLTSLLGGSAVIIIIGLVLATLVAMYVLTNQKHN.

Residues M1–F33 form a necessary for nucleocapsid assembly and virus assembly region. Positions F33–R68 are host transcription inhibition. The short motif at L41 to L48 is the Supraphysiological nuclear export signal element. N47 is a glycosylation site (N-linked (GlcNAc...) asparagine; by host). A disordered region spans residues L48–V118. The Nuclear localization signal motif lies at K64–R68. Residues G76–K91 are compositionally biased toward basic residues. The binding to the viral RNA stretch occupies residues A90 to T126. 2 positions are modified to phosphothreonine: T92 and T107. Positions N103–M117 are enriched in basic residues. The interval P111–K125 is ribosome-binding. S123 is modified (phosphoserine). A Peptidase S3 domain is found at K125–W274. Position 126 is a phosphothreonine (T126). H151 (charge relay system) is an active-site residue. An interaction with spike glycoprotein E2 region spans residues K167–Y172. Residues D173 and S225 each act as charge relay system in the active site. Positions E259–T263 are interaction with spike glycoprotein E2. Residues S275–V286 form a functions as an uncleaved signal peptide for the precursor of protein E3/E2 region. At S275 to T702 the chain is on the extracellular side. Disulfide bonds link C281-C290, C352-C456, C355-C360, C423-C437, C484-C599, C533-C559, and C535-C553. N285 is a glycosylation site (N-linked (GlcNAc...) asparagine; by host). N545 and N651 each carry an N-linked (GlcNAc...) asparagine; by host glycan. Residues G703–C723 form a helical membrane-spanning segment. Residues R724–S728 are interaction with the capsid protein. The Cytoplasmic segment spans residues R724–A756. S-palmitoyl cysteine; by host attachment occurs at residues C729, C749, and C750. A disulfide bond links C729 and C750. A transient transmembrane before p62-6K protein processing region spans residues L735–A754. The Extracellular portion of the chain corresponds to E757–N768. Residues N769 to T789 form a helical membrane-spanning segment. R790 is a topological domain (cytoplasmic). A helical membrane pass occupies residues L791–G811. Topologically, residues A812–S1224 are extracellular. Cystine bridges form between C861-C926, C874-C906, C875-C908, and C880-C890. An E1 fusion peptide loop region spans residues V896–T913. N946 and N1082 each carry an N-linked (GlcNAc...) asparagine; by host glycan. 4 disulfide bridges follow: C1071/C1083, C1113/C1188, C1118/C1192, and C1140/C1182. The chain crosses the membrane as a helical span at residues L1225–M1245. Residues Y1246–N1254 are Cytoplasmic-facing.

In terms of assembly, homodimer. Homomultimer. Interacts with host karyopherin KPNA4; this interaction allows the nuclear import of the viral capsid protein. Interacts with spike glycoprotein E2. Interacts with host IRAK1; the interaction leads to inhibition of IRAK1-dependent signaling. Part of a tetrameric complex composed of host CRM1, host importin alpha/beta dimer and the viral capsid; this complex blocks the receptor-mediated transport through the nuclear pore. Interacts with host phosphatase PPP1CA; this interaction dephosphorylates the capsid protein, which increases its ability to bind to the viral genome. The precursor of protein E3/E2 and E1 form a heterodimer shortly after synthesis. As to quaternary structure, interacts with spike glycoprotein E2. The precursor of protein E3/E2 and E1 form a heterodimer shortly after synthesis. Processing of the precursor of protein E3/E2 into E2 and E3 results in a heterodimer of the spike glycoproteins E2 and E1. Spike at virion surface are constituted of three E2-E1 heterodimers. After target cell attachment and endocytosis, E1 change conformation to form homotrimers. Interacts with 6K protein. Interacts with host LDLRAD3; this interaction mediates viral entry to the host cell. In terms of assembly, interacts with spike glycoprotein E1. Processing of the precursor of protein E3/E2 into E2 and E3 results in a heterodimer of the spike glycoproteins E2 and E1. Spike at virion surface are constituted of a trimer of E2-E1 heterodimers. Interacts with 6K protein. Interacts with host LDLRAD3; this interaction mediates viral entry to the host cell. Oligomer. Interacts with spike glycoprotein E1. Interacts with spike glycoprotein E2. Post-translationally, structural polyprotein: Specific enzymatic cleavages in vivo yield mature proteins. Capsid protein is auto-cleaved during polyprotein translation, unmasking a signal peptide at the N-terminus of the precursor of E3/E2. The remaining polyprotein is then targeted to the host endoplasmic reticulum, where host signal peptidase cleaves it into pE2, 6K and E1 proteins. pE2 is further processed to mature E3 and E2 by host furin in trans-Golgi vesicle. In terms of processing, phosphorylated on serine and threonine residues. Palmitoylated via thioester bonds. These palmitoylations may induce disruption of the C-terminus transmembrane. This would result in the reorientation of E2 C-terminus from lumenal to cytoplasmic side. Post-translationally, N-glycosylated. In terms of processing, palmitoylated via thioester bonds.

The protein resides in the virion. Its subcellular location is the host cytoplasm. It is found in the host cell membrane. It localises to the host nucleus. The protein localises to the virion membrane. The protein resides in the host Golgi apparatus. Its subcellular location is the host trans-Golgi network. It is found in the host endoplasmic reticulum. The enzyme catalyses Autocatalytic release of the core protein from the N-terminus of the togavirus structural polyprotein by hydrolysis of a -Trp-|-Ser- bond.. In terms of biological role, forms an icosahedral capsid with a T=4 symmetry composed of 240 copies of the capsid protein surrounded by a lipid membrane through which penetrate 80 spikes composed of trimers of E1-E2 heterodimers. The capsid protein binds to the viral RNA genome at a site adjacent to a ribosome binding site for viral genome translation following genome release. Possesses a protease activity that results in its autocatalytic cleavage from the nascent structural protein. Following its self-cleavage, the capsid protein transiently associates with ribosomes, and within several minutes the protein binds to viral RNA and rapidly assembles into icosahedric core particles. The resulting nucleocapsid eventually associates with the cytoplasmic domain of the spike glycoprotein E2 at the cell membrane, leading to budding and formation of mature virions. In case of infection, new virions attach to target cells and after clathrin-mediated endocytosis their membrane fuses with the host endosomal membrane. This leads to the release of the nucleocapsid into the cytoplasm, followed by an uncoating event necessary for the genomic RNA to become accessible. The uncoating might be triggered by the interaction of capsid proteins with ribosomes. Binding of ribosomes would release the genomic RNA since the same region is genomic RNA-binding and ribosome-binding. Specifically inhibits interleukin-1 receptor-associated kinase 1/IRAK1-dependent signaling during viral entry, representing a means by which the alphaviruses may evade innate immune detection and activation prior to viral gene expression. Inhibits host transcription. Forms a tetrameric complex with XPO1/CRM1 and the nuclear import receptor importin. This complex blocks the central channel of host nuclear pores thereby inhibiting the receptor-mediated nuclear transport and thus the host mRNA and rRNA transcription. The inhibition of transcription is linked to a cytopathic effect on the host cell. Functionally, provides the signal sequence for the translocation of the precursor of protein E3/E2 to the host endoplasmic reticulum. Furin-cleaved E3 remains associated with spike glycoprotein E1 and mediates pH protection of the latter during the transport via the secretory pathway. After virion release from the host cell, the assembly protein E3 is gradually released in the extracellular space. Its function is as follows. Plays a role in viral attachment to target host cell, by binding to the cell receptor LDLRAD3. Synthesized as a p62 precursor which is processed by furin at the cell membrane just before virion budding, giving rise to E2-E1 heterodimer. The p62-E1 heterodimer is stable, whereas E2-E1 is unstable and dissociate at low pH. p62 is processed at the last step, presumably to avoid E1 fusion activation before its final export to cell surface. E2 C-terminus contains a transitory transmembrane that would be disrupted by palmitoylation, resulting in reorientation of the C-terminal tail from lumenal to cytoplasmic side. This step is critical since E2 C-terminus is involved in budding by interacting with capsid proteins. This release of E2 C-terminus in cytoplasm occurs lately in protein export, and precludes premature assembly of particles at the endoplasmic reticulum membrane. Acts as a viroporin that participates in virus glycoprotein processing and transport to the plasma membrane, cell permeabilization and budding of viral particles. Disrupts the calcium homeostasis of the cell, probably at the endoplasmic reticulum level. This leads to cytoplasmic calcium elevation. Because of its lipophilic properties, the 6K protein is postulated to influence the selection of lipids that interact with the transmembrane domains of the glycoproteins, which, in turn, affects the deformability of the bilayer required for the extreme curvature that occurs as budding proceeds. Present in low amount in virions, about 3% compared to viral glycoproteins. In terms of biological role, class II viral fusion protein. Fusion activity is inactive as long as E1 is bound to E2 in mature virion. After virus attachment to cell receptor LDLRAD3 and endocytosis, acidification of the endosome induce dissociation of E1/E2 heterodimer and concomitant trimerization of the E1 subunits. This E1 trimer is fusion active, and promotes release of viral nucleocapsid in cytoplasm after endosome and viral membrane fusion. Efficient fusion requires the presence of cholesterol and sphingolipid in the target membrane. The protein is Structural polyprotein of Venezuelan equine encephalitis virus (strain Everglades Fe3-7c) (VEEV).